The following is an 86-amino-acid chain: Large ribosomal subunit protein bL27 (86 aa).

Belongs to the bacterial ribosomal protein bL27 family.

The protein is Large ribosomal subunit protein bL27 of Cupriavidus metallidurans (strain ATCC 43123 / DSM 2839 / NBRC 102507 / CH34) (Ralstonia metallidurans).